The chain runs to 659 residues: Pentatricopeptide repeat-containing protein At3g48810 (659 aa).

PPR repeat units lie at residues Thr75–Cys109, Ser110–Pro144, Ser145–Pro179, Asn180–Pro214, Asp215–Glu243, Val245–Pro279, Asn280–Pro314, Asn315–Pro350, Asn351–Pro385, Asn386–Pro420, Asn421–Pro455, Ser456–Pro490, Asn492–Trp526, Ser527–Pro561, Asp562–Pro598, and Asp599–Pro633.

The protein belongs to the PPR family. P subfamily.

This chain is Pentatricopeptide repeat-containing protein At3g48810, found in Arabidopsis thaliana (Mouse-ear cress).